A 79-amino-acid chain; its full sequence is Cell division protein ZapB (79 aa).

The stretch at 4–78 (EVFEKLEAKV…LRALLGKMEE (75 aa)) forms a coiled coil.

The protein belongs to the ZapB family. In terms of assembly, homodimer. The ends of the coiled-coil dimer bind to each other, forming polymers. Interacts with FtsZ.

The protein resides in the cytoplasm. Functionally, non-essential, abundant cell division factor that is required for proper Z-ring formation. It is recruited early to the divisome by direct interaction with FtsZ, stimulating Z-ring assembly and thereby promoting cell division earlier in the cell cycle. Its recruitment to the Z-ring requires functional FtsA or ZipA. In Pectobacterium atrosepticum (strain SCRI 1043 / ATCC BAA-672) (Erwinia carotovora subsp. atroseptica), this protein is Cell division protein ZapB.